Reading from the N-terminus, the 174-residue chain is Protein SHI RELATED SEQUENCE 3 (174 aa).

6 residues coordinate Zn(2+): Cys-9, Cys-12, Cys-20, Cys-25, Cys-29, and Cys-36. Residues 9–36 (CEDCGNQAKKDCVYMRCRTCCKSKAFHC) constitute a DNA-binding region (zn(2)-C6 fungal-type; degenerate). The short motif at 110-113 (IGGH) is the Required for homo- and heterodimerization element.

It belongs to the SHI protein family.

The protein resides in the nucleus. Transcription activator that binds DNA on 5'-ACTCTAC-3' and promotes auxin homeostasis-regulating gene expression (e.g. YUC genes), as well as genes affecting stamen development, cell expansion and timing of flowering. Synergistically with other SHI-related proteins, regulates gynoecium, stamen and leaf development in a dose-dependent manner, controlling apical-basal patterning. Promotes style and stigma formation, and influences vascular development during gynoecium development. May also have a role in the formation and/or maintenance of the shoot apical meristem (SAM). The chain is Protein SHI RELATED SEQUENCE 3 (SRS3) from Arabidopsis thaliana (Mouse-ear cress).